Reading from the N-terminus, the 251-residue chain is Small ribosomal subunit protein uS2 (251 aa).

It belongs to the universal ribosomal protein uS2 family.

The polypeptide is Small ribosomal subunit protein uS2 (rpsB) (Arthrospira platensis (Spirulina platensis)).